Reading from the N-terminus, the 476-residue chain is MCVKLAGNLFKTSDFIQCRKVILAVSGGSDSLALLFLVKDHLKTFSIPTEIIVVTVDHQLRRESACEAESVAEICRAHHIQHVIVRWEGKKPKTHIISSARTVRYNLLFKEAQKQGATLIMTGHTLNDQVETYQMRCQRLQKSADVLQREAFEDMRDGVCSTETRANIAEKSYGLMYERGLSCIPREALLNQTVRLIRPLLGVKRKTLRAYLRLKGKTWIDDPTNENPNFERVRVRQSLHPKKFAGIAQKVHEATLQRRKQAQNVANLILALDVSVEHGRCFIAKPVSFLQQHSGFPFVVGLFAVLMGGGFYLLPTKKLNTLVSKLCLHSLEKRRFTLAGSVIESNRSGLAFWRESRNIKEGAVEPGKTFLWDGRYQITNRGDETIKVGAAGLQQLKSLFKNNNFDLENAHFPSLQSLLMISNDKGYDIPELTNHTTSQQSIIIKRIMAPFDWLLSCEDVPFVNVLEPFFDIKVER.

Residue 26–31 (SGGSDS) coordinates ATP.

Belongs to the tRNA(Ile)-lysidine synthase family.

It localises to the cytoplasm. It carries out the reaction cytidine(34) in tRNA(Ile2) + L-lysine + ATP = lysidine(34) in tRNA(Ile2) + AMP + diphosphate + H(+). Ligates lysine onto the cytidine present at position 34 of the AUA codon-specific tRNA(Ile) that contains the anticodon CAU, in an ATP-dependent manner. Cytidine is converted to lysidine, thus changing the amino acid specificity of the tRNA from methionine to isoleucine. In Bartonella quintana (strain Toulouse) (Rochalimaea quintana), this protein is tRNA(Ile)-lysidine synthase.